The sequence spans 297 residues: Probable endonuclease 4 (297 aa).

The Zn(2+) site is built by H69, H110, E145, D179, H182, H214, D227, H229, and E259.

This sequence belongs to the AP endonuclease 2 family. The cofactor is Zn(2+).

It catalyses the reaction Endonucleolytic cleavage to 5'-phosphooligonucleotide end-products.. Its function is as follows. Endonuclease IV plays a role in DNA repair. It cleaves phosphodiester bonds at apurinic or apyrimidinic (AP) sites, generating a 3'-hydroxyl group and a 5'-terminal sugar phosphate. In Bacillus velezensis (strain DSM 23117 / BGSC 10A6 / LMG 26770 / FZB42) (Bacillus amyloliquefaciens subsp. plantarum), this protein is Probable endonuclease 4.